A 55-amino-acid polypeptide reads, in one-letter code: Small ribosomal subunit protein eS31 (55 aa).

Residues C26, C29, C44, and C47 each contribute to the Zn(2+) site.

This sequence belongs to the eukaryotic ribosomal protein eS31 family. Part of the 30S ribosomal subunit. Zn(2+) is required as a cofactor.

This is Small ribosomal subunit protein eS31 from Archaeoglobus fulgidus (strain ATCC 49558 / DSM 4304 / JCM 9628 / NBRC 100126 / VC-16).